The following is a 709-amino-acid chain: Methylmalonyl-CoA mutase (709 aa).

Substrate-binding positions include 73 to 77, 183 to 185, Arg195, Lys222, His232, and 271 to 273; these read TIRQY, TIQ, and RLS. The B12-binding domain occupies 579-709; that stretch reads RPRMLVVKMG…ILDLIREARS (131 aa). Adenosylcob(III)alamin is bound at residue His592.

The protein belongs to the methylmalonyl-CoA mutase family. In terms of assembly, homodimer. Adenosylcob(III)alamin is required as a cofactor.

The catalysed reaction is (R)-methylmalonyl-CoA = succinyl-CoA. It participates in metabolic intermediate metabolism; propanoyl-CoA degradation; succinyl-CoA from propanoyl-CoA: step 3/3. Its function is as follows. Radical enzyme that catalyzes the transformation of (2R)-methylmalonyl-CoA to succinyl-CoA. Is involved in the ethylmalonyl-CoA pathway for acetyl-CoA assimilation required for R.sphaeroides growth on acetate as sole carbon source. This chain is Methylmalonyl-CoA mutase, found in Cereibacter sphaeroides (strain ATCC 17023 / DSM 158 / JCM 6121 / CCUG 31486 / LMG 2827 / NBRC 12203 / NCIMB 8253 / ATH 2.4.1.) (Rhodobacter sphaeroides).